Consider the following 361-residue polypeptide: Feruloyl CoA ortho-hydroxylase 2 (361 aa).

Positions 211–312 (GSTRINLNYY…RISVPIFVSP (102 aa)) constitute a Fe2OG dioxygenase domain. Tyr220 lines the 2-oxoglutarate pocket. His235, Asp237, and His293 together coordinate Fe cation. Residues Arg303 and Ser305 each contribute to the 2-oxoglutarate site.

Belongs to the iron/ascorbate-dependent oxidoreductase family. The cofactor is L-ascorbate. Requires Fe(2+) as cofactor. As to expression, low expression in roots.

It carries out the reaction (E)-feruloyl-CoA + 2-oxoglutarate + O2 = (E)-6-hydroxyferuloyl-CoA + succinate + CO2. It catalyses the reaction (E)-6-hydroxyferuloyl-CoA = scopoletin + CoA. 2-oxoglutarate (OG)- and Fe(II)-dependent dioxygenase (2OGD)involved in scopoletin biosynthesis. Converts feruloyl CoA into 6'-hydroxyferuloyl CoA but has no activity with ferulic acid, feruloylquinic acid, caffeic acid, caffeoyl CoA, p-coumaric acid, cinnamic acid, cinnamoyl CoA or benzoyl CoA. This is Feruloyl CoA ortho-hydroxylase 2 from Arabidopsis thaliana (Mouse-ear cress).